The sequence spans 416 residues: MAALEKFLVEYKSAVEKKLAEYKCNTNTAIELKLVRFPEDLENDIRTFFPEYTHQLFGDDETAFGYKGLKILLYYIAGSLSTLFRVEYSSKVDENFDCVEADDVEGKIRQIIPPGFCTNTNDFLSLLEKETNFKPFGTLLHTYTVPSQTGGETFTFQIHKADMTCRGFREYHERLQTFLMWFIETASFIDVDDERWHYFLVFEKYNKDGATLFATVGYMTVYNYYVYPDKTRPRVSQMLILTPFQGQGHGAQLLETVHRYYISFPTVLDITAEDPSRSYLKLRDFVLVKFCQFLPSFSRERLLQGFSEDMAIQAQQMFKINKQHARRVYEILRLLVTDMSDAEQYRSYRLDIKRRLISPYKKKQRDLAKMKKCLRPEELTNQMNQIEISVQHEQLEERFQELVEDYRRVIERLAQE.

Alanine 2 is modified (N-acetylalanine). An N6-acetyllysine mark is found at lysine 6 and lysine 12. The interval 59-61 (DDE) is interaction with histone H4 N-terminus. Residue serine 187 is modified to Phosphoserine. The interval 222–224 (YNY) is interaction with histone H4 N-terminus. Residues 238-240 (MLI) and 245-251 (QGQGHGA) contribute to the acetyl-CoA site. Glutamate 273 (proton donor/acceptor) is an active-site residue. Position 340 is a phosphoserine (serine 340).

This sequence belongs to the HAT1 family. As to quaternary structure, catalytic subunit of the type B histone acetyltransferase (HAT) complex, composed of RBBP7 and HAT1. Interacts with histones H4 and H2A. The interaction is dependent of the ability of RBBP7 to bind to the N-terminus of histones. Component of the histone H3.1 and H3.3 complexes. Phosphorylated by AMPK at Ser-187; phosphorylation increases HAT1 activity.

The protein localises to the nucleus matrix. It is found in the mitochondrion. It carries out the reaction L-lysyl-[protein] + acetyl-CoA = N(6)-acetyl-L-lysyl-[protein] + CoA + H(+). In terms of biological role, histone acetyltransferase that plays a role in different biological processes including cell cycle progression, glucose metabolism, histone production or DNA damage repair. Coordinates histone production and acetylation via H4 promoter binding. Acetylates histone H4 at 'Lys-5' (H4K5ac) and 'Lys-12' (H4K12ac) and, to a lesser extent, histone H2A at 'Lys-5' (H2AK5ac). Drives H4 production by chromatin binding to support chromatin replication and acetylation. Since transcription of H4 genes is tightly coupled to S-phase, plays an important role in S-phase entry and progression. Promotes homologous recombination in DNA repair by facilitating histone turnover and incorporation of acetylated H3.3 at sites of double-strand breaks. In addition, acetylates other substrates such as chromatin-related proteins. Also acetylates RSAD2 which mediates the interaction of ubiquitin ligase UBE4A with RSAD2 leading to RSAD2 ubiquitination and subsequent degradation. This chain is Histone acetyltransferase type B catalytic subunit (Hat1), found in Mus musculus (Mouse).